The following is a 179-amino-acid chain: Large ribosomal subunit protein uL5 (179 aa).

It belongs to the universal ribosomal protein uL5 family. As to quaternary structure, part of the 50S ribosomal subunit; part of the 5S rRNA/L5/L18/L25 subcomplex. Contacts the 5S rRNA and the P site tRNA. Forms a bridge to the 30S subunit in the 70S ribosome.

This is one of the proteins that bind and probably mediate the attachment of the 5S RNA into the large ribosomal subunit, where it forms part of the central protuberance. In the 70S ribosome it contacts protein S13 of the 30S subunit (bridge B1b), connecting the 2 subunits; this bridge is implicated in subunit movement. Contacts the P site tRNA; the 5S rRNA and some of its associated proteins might help stabilize positioning of ribosome-bound tRNAs. This chain is Large ribosomal subunit protein uL5, found in Enterobacter sp. (strain 638).